A 304-amino-acid polypeptide reads, in one-letter code: Hairy/enhancer-of-split related with YRPW motif protein 1 (304 aa).

The interval 1 to 52 (MKRAHPEYSSSDSELDETIEVEKESADENGNLSSALGSMSPTTSSQILARKR) is disordered. Over residues 28-47 (ENGNLSSALGSMSPTTSSQI) the composition is skewed to polar residues. The interval 48–117 (LARKRRRGII…GGKGYFDAHA (70 aa)) is transcriptional repression and interaction with NCOR1 and SIN3A. The bHLH domain occupies 49–104 (ARKRRRGIIEKRRRDRINNSLSELRRLVPSAFEKQGSAKLEKAEILQMTVDHLKML). In terms of domain architecture, Orange spans 122-158 (YRSLGFRECLAEVARYLSIIEGLDASDPLRVRLVSHL). The interval 196–234 (LPQNGHGNAGTTASPTEPHHQGRLGSAHPEAPALRAPPS) is disordered. Positions 200-210 (GHGNAGTTASP) are enriched in polar residues. The short motif at 294 to 297 (YRPW) is the YRPW motif element.

It belongs to the HEY family. Self-associates. Interacts with HES1 and HEYL. Interacts with HDAC1, NCOR1 and SIN3A. Interacts with GATA4 and GATA6. Interacts with CCDC89/BOIP. Expressed in the somitic mesoderm, the central nervous system, the kidney, the heart, nasal epithelium, and limbs.

The protein resides in the nucleus. Its function is as follows. Transcriptional repressor which binds preferentially to the canonical E box sequence 5'-CACGTG-3'. Downstream effector of Notch signaling required for cardiovascular development. Specifically required for the Notch-induced endocardial epithelial to mesenchymal transition, which is itself criticial for cardiac valve and septum development. May be required in conjunction with HEY2 to specify arterial cell fate or identity. Promotes maintenance of neuronal precursor cells and glial versus neuronal fate specification. Represses transcription by the cardiac transcriptional activators GATA4 and GATA6 and by the neuronal bHLH factors ASCL1/MASH1 and NEUROD4/MATH3. Involved in the regulation of liver cancer cells self-renewal. The polypeptide is Hairy/enhancer-of-split related with YRPW motif protein 1 (HEY1) (Homo sapiens (Human)).